Reading from the N-terminus, the 205-residue chain is Large ribosomal subunit protein uL10 (205 aa).

Residues 167 to 205 are disordered; it reads AQGAAPAEAKAEAPASEEKAADTPAEQPAESAPEAAPEA. 2 stretches are compositionally biased toward low complexity: residues 169-180 and 190-205; these read GAAPAEAKAEAP and PAEQ…APEA.

It belongs to the universal ribosomal protein uL10 family. Part of the ribosomal stalk of the 50S ribosomal subunit. The N-terminus interacts with L11 and the large rRNA to form the base of the stalk. The C-terminus forms an elongated spine to which L12 dimers bind in a sequential fashion forming a multimeric L10(L12)X complex.

Forms part of the ribosomal stalk, playing a central role in the interaction of the ribosome with GTP-bound translation factors. The protein is Large ribosomal subunit protein uL10 of Treponema denticola (strain ATCC 35405 / DSM 14222 / CIP 103919 / JCM 8153 / KCTC 15104).